We begin with the raw amino-acid sequence, 108 residues long: Integration host factor subunit alpha (108 aa).

Belongs to the bacterial histone-like protein family. As to quaternary structure, heterodimer of an alpha and a beta chain.

In terms of biological role, this protein is one of the two subunits of integration host factor, a specific DNA-binding protein that functions in genetic recombination as well as in transcriptional and translational control. This Methylorubrum extorquens (strain CM4 / NCIMB 13688) (Methylobacterium extorquens) protein is Integration host factor subunit alpha.